The primary structure comprises 574 residues: Hyaluronan synthase 3 (574 aa).

Over 1–15 (MPVSLSTALRVVGTS) the chain is Cytoplasmic. The helical transmembrane segment at 16–36 (LFALAVLGGILAAYVTGYQFI) threads the bilayer. Residues 37–44 (HTEKHYLS) lie on the Extracellular side of the membrane. A helical transmembrane segment spans residues 45–65 (FGLYGAILGLHLFIQSLFAFL). The Cytoplasmic segment spans residues 66 to 398 (EHRRMRAERQ…NALWFHKHHL (333 aa)). The chain crosses the membrane as a helical span at residues 399–419 (WMTYESVVTGFFPFFLIATVI). Residues 420–429 (QLFYRGRIWN) are Extracellular-facing. The helical transmembrane segment at 430–450 (ILLFLLTVQLVGIIKATYACF) threads the bilayer. Over 451 to 456 (LRGSAE) the chain is Cytoplasmic. Residues 457–477 (MIFVSLYALLYMSSLLPAKMF) traverse the membrane as a helical segment. Residues 478-494 (AIATINKSGWGTSGRRT) are Extracellular-facing. The chain crosses the membrane as a helical span at residues 495-515 (IVVNFVGLLPVSVWAAVLLGG). Residues 516–530 (LAYTAYSQDLLSDTE) are Cytoplasmic-facing. The helical transmembrane segment at 531–551 (VAFLISGAVLYACYWVALLTL) threads the bilayer. The Extracellular segment spans residues 552 to 574 (YLAMVARRCGKRKEQCGLVFAEV).

The protein belongs to the NodC/HAS family. The cofactor is Mg(2+). Post-translationally, O-GlcNAcylation increases the hyaluronan synthase activity, HAS3 stability and its plasma membrane residence. The concentration of UDP-GlcNAc controls the level of O-GlcNAc modification.

The protein resides in the cell membrane. The protein localises to the golgi apparatus membrane. It localises to the golgi apparatus. Its subcellular location is the trans-Golgi network membrane. It is found in the cytoplasmic vesicle. The catalysed reaction is [hyaluronan](n) + UDP-N-acetyl-alpha-D-glucosamine = N-acetyl-beta-D-glucosaminyl-(1-&gt;4)-[hyaluronan](n) + UDP + H(+). The enzyme catalyses N-acetyl-beta-D-glucosaminyl-(1-&gt;4)-[hyaluronan](n) + UDP-alpha-D-glucuronate = [hyaluronan](n+1) + UDP + H(+). Its pathway is glycan biosynthesis; hyaluronan biosynthesis. In terms of biological role, catalyzes the addition of GlcNAc or GlcUA monosaccharides to the nascent hyaluronan polymer. Therefore, it is essential to hyaluronan synthesis a major component of most extracellular matrices that has a structural role in tissues architectures and regulates cell adhesion, migration and differentiation. This is one of three isoenzymes responsible for cellular hyaluronan synthesis. The polypeptide is Hyaluronan synthase 3 (HAS3) (Gallus gallus (Chicken)).